A 172-amino-acid polypeptide reads, in one-letter code: Adenine phosphoribosyltransferase (172 aa).

Belongs to the purine/pyrimidine phosphoribosyltransferase family. In terms of assembly, homodimer.

It is found in the cytoplasm. It carries out the reaction AMP + diphosphate = 5-phospho-alpha-D-ribose 1-diphosphate + adenine. It participates in purine metabolism; AMP biosynthesis via salvage pathway; AMP from adenine: step 1/1. Functionally, catalyzes a salvage reaction resulting in the formation of AMP, that is energically less costly than de novo synthesis. The protein is Adenine phosphoribosyltransferase of Streptococcus equi subsp. zooepidemicus (strain H70).